The primary structure comprises 747 residues: Ferrichrome outer membrane transporter/phage receptor (747 aa).

The first 33 residues, 1 to 33 (MARSKTAQPKHSLRKIAVVVATAVSGMSVYAQA), serve as a signal peptide directing secretion. Over 34–192 (AVEPKEDTIT…NMVSKRPTTE (159 aa)) the chain is Periplasmic. The short motif at 40 to 47 (DTITVTAA) is the TonB box element. Residues 75-187 (PIQKVPQSIS…PGGLLNMVSK (113 aa)) form the TBDR plug domain. Ferrichrome-binding positions include Arg114, Gln133, and 148-149 (FY). The TBDR beta-barrel domain maps to 192-747 (EPLKEVQFKA…QVVATATFRF (556 aa)). A beta stranded transmembrane segment spans residues 193–201 (PLKEVQFKA). At 202–206 (GTDSL) the chain is on the extracellular side. A beta stranded membrane pass occupies residues 207 to 215 (FQTGFDFSD). The Periplasmic portion of the chain corresponds to 216–222 (SLDDDGV). The beta stranded transmembrane segment at 223 to 231 (YSYRLTGLA) threads the bilayer. Topologically, residues 232–245 (RSANAQQKGSEEQR) are extracellular. Residues 246–255 (YAIAPAFTWR) form a beta stranded membrane-spanning segment. The Periplasmic segment spans residues 256 to 259 (PDDK). Residues 260–268 (TNFTFLSYF) traverse the membrane as a beta stranded segment. The Extracellular segment spans residues 269–312 (QNEPETGYYGWLPKEGTVEPLPNGKRLPTDFNEGAKNNTYSRNE). 277-279 (YGW) is a ferrichrome binding site. Residues 313–321 (KMVGYSFDH) form a beta stranded membrane-spanning segment. The Periplasmic segment spans residues 322-326 (EFNDT). Residues 327–335 (FTVRQNLRF) traverse the membrane as a beta stranded segment. Over 336 to 387 (AENKTSQNSVYGYGVCSDPANAYSKQCAALAPADKGHYLARKYVVDDEKLQN) the chain is Extracellular. Ferrichrome is bound at residue 346 to 348 (YGY). An intrachain disulfide couples Cys351 to Cys362. A beta stranded membrane pass occupies residues 388-396 (FSVDTQLQS). Topologically, residues 397–404 (KFATGDID) are periplasmic. Residues 405-413 (HTLLTGVDF) traverse the membrane as a beta stranded segment. Topologically, residues 414–464 (MRMRNDINAWFGYDDSVPLLNLYNPVNTDFDFNAKDPANSGPYRILNKQKQ) are extracellular. Phe424 contributes to the ferrichrome binding site. A beta stranded membrane pass occupies residues 465–473 (TGVYVQDQA). Residues 474–477 (QWDK) are Periplasmic-facing. A beta stranded transmembrane segment spans residues 478-486 (VLVTLGGRY). At 487-508 (DWADQESLNRVAGTTDKRDDKQ) the chain is on the extracellular side. Residues 509–517 (FTWRGGVNY) form a beta stranded membrane-spanning segment. The Periplasmic portion of the chain corresponds to 518 to 522 (LFDNG). Residues 523–531 (VTPYFSYSE) traverse the membrane as a beta stranded segment. Residues 532-551 (SFEPSSQVGKDGNIFAPSKG) lie on the Extracellular side of the membrane. Residues 552 to 560 (KQYEVGVKY) form a beta stranded membrane-spanning segment. Residues 561 to 565 (VPEDR) lie on the Periplasmic side of the membrane. The beta stranded transmembrane segment at 566–574 (PIVVTGAVY) threads the bilayer. Over 575-601 (NLTKTNNLMADPEGSFFSVEGGEIRAR) the chain is Extracellular. A beta stranded membrane pass occupies residues 602–610 (GVEIEAKAA). At 611–613 (LSA) the chain is on the periplasmic side. A beta stranded transmembrane segment spans residues 614–622 (SVNVVGSYT). Over 623 to 645 (YTDAEYTTDTTYKGNTPAQVPKH) the chain is Extracellular. Residues 646–654 (MASLWADYT) traverse the membrane as a beta stranded segment. At 655-661 (FFDGPLS) the chain is on the periplasmic side. Residues 662 to 670 (GLTLGTGGR) form a beta stranded membrane-spanning segment. At 671 to 689 (YTGSSYGDPANSFKVGSYT) the chain is on the extracellular side. The beta stranded transmembrane segment at 690-698 (VVDALVRYD) threads the bilayer. Residues 699–705 (LARVGMA) lie on the Periplasmic side of the membrane. Residues 706-714 (GSNVALHVN) form a beta stranded membrane-spanning segment. The Extracellular portion of the chain corresponds to 715–737 (NLFDREYVASCFNTYGCFWGAER). An intrachain disulfide couples Cys725 to Cys731. A TonB C-terminal box motif is present at residues 730–747 (GCFWGAERQVVATATFRF). Ala735 contributes to the ferrichrome binding site. Residues 738–746 (QVVATATFR) form a beta stranded membrane-spanning segment. Phe747 is a topological domain (periplasmic).

It belongs to the TonB-dependent receptor family. Monomer. Interacts with TonB. Interacts with Escherichia phage T5 receptor-binding protein pb5 (RBP-pb5); this interaction is necessary for the entry of the viral genome into the host cell.

The protein localises to the cell outer membrane. With respect to regulation, binding of ferrichrome or colicin M enhances the interaction between FhuA and TonB. TonB activates FhuA through interaction with the beta-barrel. Functionally, involved in the uptake of iron in complex with ferrichrome, a hydroxamate-type siderophore. Binds and transports ferrichrome-iron across the outer membrane. In addition to its role in ferrichrome-iron transport, transports the antibiotic albomycin, which is a structural analog of ferrichrome, and acts as a receptor for colicin M, microcin J25 and bacteriophages T1, T5, phi80 and UC-1. The energy source, which is required for all FhuA functions except infection by phage T5, is provided by the inner membrane TonB system. The protein is Ferrichrome outer membrane transporter/phage receptor of Escherichia coli (strain K12).